Here is a 138-residue protein sequence, read N- to C-terminus: Integration host factor subunit beta (138 aa).

Positions 81–98 are enriched in basic and acidic residues; sequence KAGKELRERVDRSLERQG. Positions 81 to 138 are disordered; that stretch reads KAGKELRERVDRSLERQGDSSSEGEPVSLTAVKAARQAGGHHAAGFPAEATPTLVMSR.

It belongs to the bacterial histone-like protein family. Heterodimer of an alpha and a beta chain.

Functionally, this protein is one of the two subunits of integration host factor, a specific DNA-binding protein that functions in genetic recombination as well as in transcriptional and translational control. The protein is Integration host factor subunit beta of Ralstonia nicotianae (strain ATCC BAA-1114 / GMI1000) (Ralstonia solanacearum).